The chain runs to 545 residues: Glutamine-dependent NAD(+) synthetase (545 aa).

Residues 5–247 enclose the CN hydrolase domain; it reads LRIAMAQFDF…DQWLVVDYMR (243 aa). E46 acts as the Proton acceptor; for glutaminase activity in catalysis. The For glutaminase activity role is filled by K113. Y119 contacts L-glutamine. Residue C151 is the Nucleophile; for glutaminase activity of the active site. L-glutamine contacts are provided by S177 and K183. Residues 269–545 are ligase; that stretch reads VWRAVVRGVQ…RYPISNAYRG (277 aa). 292–299 contacts ATP; it reads GLSGGIDS. N375 is a binding site for deamido-NAD(+). T399 is an ATP binding site. Deamido-NAD(+) is bound by residues E404 and K516.

It in the C-terminal section; belongs to the NAD synthetase family.

It catalyses the reaction deamido-NAD(+) + L-glutamine + ATP + H2O = L-glutamate + AMP + diphosphate + NAD(+) + H(+). The protein operates within cofactor biosynthesis; NAD(+) biosynthesis; NAD(+) from deamido-NAD(+) (L-Gln route): step 1/1. Catalyzes the ATP-dependent amidation of deamido-NAD to form NAD. Uses L-glutamine as a nitrogen source. The protein is Glutamine-dependent NAD(+) synthetase of Xylella fastidiosa (strain Temecula1 / ATCC 700964).